Reading from the N-terminus, the 427-residue chain is Endothelin-1 receptor (427 aa).

A signal peptide spans 1 to 20; sequence MSIFCLAAYFWLTMVGGVMA. Residues 21–80 are Extracellular-facing; it reads DNPERYSANLSSHMEDFTPFPGTEINFLGTTHRPPNLALPSNGSMHGYCPQQTKITTAFK. N29 and N62 each carry an N-linked (GlcNAc...) asparagine glycan. The helical transmembrane segment at 81–102 threads the bilayer; it reads YINTVISCTIFIVGMVGNATLL. The Cytoplasmic segment spans residues 103–112; the sequence is RIIYQNKCMR. The helical transmembrane segment at 113–132 threads the bilayer; that stretch reads NGPNALIASLALGDLIYVVI. Over 133–159 the chain is Extracellular; that stretch reads DLPINVFKLLAGRWPFDHNDFGVFLCK. A disulfide bond links C158 and C239. A helical membrane pass occupies residues 160–181; the sequence is LFPFLQKSSVGITVLNLCALSV. Over 182-205 the chain is Cytoplasmic; that stretch reads DRYRAVASWSRVQGIGIPLITAIE. Residues 206-229 traverse the membrane as a helical segment; it reads IVSIWILSFILAIPEAIGFVMVPF. Residues 230-256 lie on the Extracellular side of the membrane; the sequence is EYKGELHRTCMLNATSKFMEFYQDVKD. N242 carries N-linked (GlcNAc...) asparagine glycosylation. The chain crosses the membrane as a helical span at residues 257-278; the sequence is WWLFGFYFCMPLVCTAIFYTLM. Over 279-306 the chain is Cytoplasmic; the sequence is TCEMLNRRNGSLRIALSEHLKQRREVAK. The helical transmembrane segment at 307–328 threads the bilayer; that stretch reads TVFCLVVIFALCWFPLHLSRIL. Residues 329 to 347 are Extracellular-facing; the sequence is KKTVYDEMDKNRCELLSFL. A helical membrane pass occupies residues 348-372; the sequence is LLMDYIGINLATMNSCINPIALYFV. The Cytoplasmic portion of the chain corresponds to 373–427; the sequence is SKKFKNCFQSCLCCCCHQSKSLMTSVPMNGTSIQWKNQEQNNHNTERSSHKDSMN. Residues 408-427 form a disordered region; sequence KNQEQNNHNTERSSHKDSMN. The span at 416-427 shows a compositional bias: basic and acidic residues; sequence NTERSSHKDSMN. S425 is subject to Phosphoserine.

The protein belongs to the G-protein coupled receptor 1 family. Endothelin receptor subfamily. EDNRA sub-subfamily. In terms of assembly, interacts with HDAC7 and KAT5.

The protein localises to the cell membrane. Functionally, receptor for endothelin-1. Mediates its action by association with G proteins that activate a phosphatidylinositol-calcium second messenger system. The rank order of binding affinities for ET-A is: ET1 &gt; ET2 &gt;&gt; ET3. This is Endothelin-1 receptor from Mus musculus (Mouse).